The primary structure comprises 105 residues: MKEAVKMSCLCIFLFLFLFSLTDAIKCIKCGESGLFGTEDCVTGNFEAEECGPNDQYCTKIILNDGTRTTAQRGCSVGHVPESNQKDGKVSTHMSSCNTDGCNAN.

A signal peptide spans 1–24 (MKEAVKMSCLCIFLFLFLFSLTDA). The interval 79–105 (HVPESNQKDGKVSTHMSSCNTDGCNAN) is disordered. The span at 92 to 105 (THMSSCNTDGCNAN) shows a compositional bias: polar residues.

Belongs to the scoloptoxin-05 family. Contains 4 disulfide bonds. Expressed by the venom gland.

It localises to the secreted. The protein is U-scoloptoxin(05)-Sa2a of Scolopendra alternans (Florida Keys giant centipede).